The sequence spans 188 residues: Nicotinamide-nucleotide adenylyltransferase (188 aa).

Belongs to the archaeal NMN adenylyltransferase family.

The protein resides in the cytoplasm. It carries out the reaction beta-nicotinamide D-ribonucleotide + ATP + H(+) = diphosphate + NAD(+). The protein operates within cofactor biosynthesis; NAD(+) biosynthesis; NAD(+) from nicotinamide D-ribonucleotide: step 1/1. This is Nicotinamide-nucleotide adenylyltransferase from Thermococcus kodakarensis (strain ATCC BAA-918 / JCM 12380 / KOD1) (Pyrococcus kodakaraensis (strain KOD1)).